We begin with the raw amino-acid sequence, 1043 residues long: Integrator complex subunit 3 (1043 aa).

Residue Met1 is modified to N-acetylmethionine. Phosphoserine occurs at positions 502, 537, and 995. The interval 977-1043 is disordered; it reads YEDSSTKPPK…GSSAVGSDSD (67 aa). Over residues 1008–1022 the composition is skewed to acidic residues; that stretch reads AEEESGSSSASEEED.

It belongs to the Integrator subunit 3 family. In terms of assembly, component of the Integrator complex, composed of core subunits INTS1, INTS2, INTS3, INTS4, INTS5, INTS6, INTS7, INTS8, INTS9/RC74, INTS10, INTS11/CPSF3L, INTS12, INTS13, INTS14 and INTS15. The core complex associates with protein phosphatase 2A subunits PPP2CA and PPP2R1A, to form the Integrator-PP2A (INTAC) complex. Component of the SOSS complex, composed of SOSS-B (SOSS-B1/NABP2 or SOSS-B2/NABP1), SOSS-A/INTS3 and SOSS-C/INIP. SOSS complexes containing SOSS-B1/NABP2 are more abundant than complexes containing SOSS-B2/NABP1. Interacts with SOSS-B1/NABP2, SOSS-B2/NABP1 and SOSS-C/INIP; the interaction is direct. Interacts with NBN/NBS1.

It localises to the nucleus. Its subcellular location is the cytoplasm. Component of the integrator complex, a multiprotein complex that terminates RNA polymerase II (Pol II) transcription in the promoter-proximal region of genes. The integrator complex provides a quality checkpoint during transcription elongation by driving premature transcription termination of transcripts that are unfavorably configured for transcriptional elongation: the complex terminates transcription by (1) catalyzing dephosphorylation of the C-terminal domain (CTD) of Pol II subunit POLR2A/RPB1 and SUPT5H/SPT5, (2) degrading the exiting nascent RNA transcript via endonuclease activity and (3) promoting the release of Pol II from bound DNA. The integrator complex is also involved in terminating the synthesis of non-coding Pol II transcripts, such as enhancer RNAs (eRNAs), small nuclear RNAs (snRNAs), telomerase RNAs and long non-coding RNAs (lncRNAs). Within the integrator complex, INTS3 is involved in the post-termination step: INTS3 binds INTS7 in the open conformation of integrator complex and prevents the rebinding of Pol II to the integrator after termination cycle. Mediates recruitment of cytoplasmic dynein to the nuclear envelope, probably as component of the integrator complex. Its function is as follows. Component of the SOSS complex, a multiprotein complex that functions downstream of the MRN complex to promote DNA repair and G2/M checkpoint. The SOSS complex associates with single-stranded DNA at DNA lesions and influences diverse endpoints in the cellular DNA damage response including cell-cycle checkpoint activation, recombinational repair and maintenance of genomic stability. The SOSS complex is required for efficient homologous recombination-dependent repair of double-strand breaks (DSBs) and ATM-dependent signaling pathways. In the SOSS complex, it is required for the assembly of the complex and for stabilization of the complex at DNA damage sites. This Pongo abelii (Sumatran orangutan) protein is Integrator complex subunit 3 (INTS3).